We begin with the raw amino-acid sequence, 134 residues long: Translation initiation factor 2 subunit beta (134 aa).

Basic and acidic residues predominate over residues 1-12 (MGYEEQLDRALE). A disordered region spans residues 1-32 (MGYEEQLDRALEETPDIEGTAARFSVPDPDVR).

Belongs to the eIF-2-beta/eIF-5 family. Heterotrimer composed of an alpha, a beta and a gamma chain.

In terms of biological role, eIF-2 functions in the early steps of protein synthesis by forming a ternary complex with GTP and initiator tRNA. This is Translation initiation factor 2 subunit beta from Natronomonas pharaonis (strain ATCC 35678 / DSM 2160 / CIP 103997 / JCM 8858 / NBRC 14720 / NCIMB 2260 / Gabara) (Halobacterium pharaonis).